A 407-amino-acid chain; its full sequence is Substance-P receptor (407 aa).

The Extracellular portion of the chain corresponds to 1–31 (MDNVLPGDSDLFPNISTNSSESNQFVQPAWQ). N-linked (GlcNAc...) asparagine glycans are attached at residues N14 and N18. The helical transmembrane segment at 32 to 54 (IVLWAAAYTVIVVTSVVGNVVVM) threads the bilayer. The Cytoplasmic segment spans residues 55–64 (WIILAHKRMR). A helical transmembrane segment spans residues 65–86 (TVTNYFLVNLAFAEASMAAFNT). Residues 87-106 (VVNFTYAVHNEWYYGLFYCK) lie on the Extracellular side of the membrane. Residue N89 is glycosylated (N-linked (GlcNAc...) asparagine). A disulfide bridge connects residues C105 and C180. The chain crosses the membrane as a helical span at residues 107 to 128 (FHNFFPIAAVFASIYSMTAVAF). The Cytoplasmic portion of the chain corresponds to 129–148 (DRYMAIIHPLQPRLSATATK). Residues 149 to 169 (VVIFVIWVLALLLAFPQGYYS) form a helical membrane-spanning segment. At 170–194 (TTETMPGRVVCMIEWPEHPNRTYEK) the chain is on the extracellular side. A glycan (N-linked (GlcNAc...) asparagine) is linked at N189. A helical transmembrane segment spans residues 195–219 (AYHICVTVLIYFLPLLVIGYAYTVV). At 220 to 248 (GITLWASEIPGDSSDRYHEQVSAKRKVVK) the chain is on the cytoplasmic side. The chain crosses the membrane as a helical span at residues 249-270 (MMIVVVCTFAICWLPFHVFFLL). The Extracellular segment spans residues 271-283 (PYINPDLYVKKFI). A helical transmembrane segment spans residues 284-308 (QQVYLAIMWLAMSSTMYNPIIYCCL). At 309-407 (NDRFRLGFKH…SSSFYSNMLA (99 aa)) the chain is on the cytoplasmic side. A lipid anchor (S-palmitoyl cysteine) is attached at C322. The tract at residues 365–407 (HEDEAEEGPKATPSSLDLTSNGSSRSNSKTMTESSSFYSNMLA) is disordered. A compositionally biased stretch (polar residues) spans 376-407 (TPSSLDLTSNGSSRSNSKTMTESSSFYSNMLA).

This sequence belongs to the G-protein coupled receptor 1 family. As to quaternary structure, interacts with ARRB1.

It localises to the cell membrane. Functionally, this is a receptor for the tachykinin neuropeptide substance P. It is probably associated with G proteins that activate a phosphatidylinositol-calcium second messenger system. The chain is Substance-P receptor (TACR1) from Meriones unguiculatus (Mongolian jird).